We begin with the raw amino-acid sequence, 502 residues long: Glycerol kinase (502 aa).

ADP is bound at residue Thr-14. The ATP site is built by Thr-14, Thr-15, and Ser-16. Position 14 (Thr-14) interacts with sn-glycerol 3-phosphate. Arg-18 is an ADP binding site. Positions 84, 85, 136, and 246 each coordinate sn-glycerol 3-phosphate. Positions 84, 85, 136, 246, and 247 each coordinate glycerol. Residues Thr-268 and Gly-311 each coordinate ADP. Residues Thr-268, Gly-311, Gln-315, and Gly-412 each coordinate ATP. Gly-412 and Asn-416 together coordinate ADP.

This sequence belongs to the FGGY kinase family. As to quaternary structure, homotetramer and homodimer (in equilibrium). Heterodimer with EIIA-Glc. Binds 1 zinc ion per glycerol kinase EIIA-Glc dimer. The zinc ion is important for dimerization.

The catalysed reaction is glycerol + ATP = sn-glycerol 3-phosphate + ADP + H(+). The protein operates within polyol metabolism; glycerol degradation via glycerol kinase pathway; sn-glycerol 3-phosphate from glycerol: step 1/1. Its activity is regulated as follows. Activity of this regulatory enzyme is affected by several metabolites. Allosterically and non-competitively inhibited by fructose 1,6-bisphosphate (FBP) and unphosphorylated phosphocarrier protein EIIA-Glc (III-Glc), an integral component of the bacterial phosphotransferase (PTS) system. In terms of biological role, key enzyme in the regulation of glycerol uptake and metabolism. Catalyzes the phosphorylation of glycerol to yield sn-glycerol 3-phosphate. The chain is Glycerol kinase from Shigella dysenteriae serotype 1 (strain Sd197).